The sequence spans 211 residues: MTGTAKVSIPKAQPHKVPCVYLAGDLVFRPNAIELFDELKEICKDAGVQGVAPFDGQEGVEEMAPGAETSLKIAELDRKLMDRCDGGIFCLDPFRRAPDMDPGTAVELGYMAAQGKPLAGFTTDGRMYPEKVRSYRKQAWGDALKPRFTKGGSGSMEDADGLIVHSEGFLQNVMTEGFIRMSGGFVAVDFSIQEAFRTAIKDLAARLNSQH.

The protein belongs to the nucleoside deoxyribosyltransferase family.

The protein resides in the cytoplasm. It is found in the nucleus. This is an uncharacterized protein from Schizosaccharomyces pombe (strain 972 / ATCC 24843) (Fission yeast).